Reading from the N-terminus, the 639-residue chain is CREB3 regulatory factor (639 aa).

Residues 302-422 form a disordered region; the sequence is PLPQEGPGSL…SVEDLKEVTS (121 aa). Over residues 310 to 328 the composition is skewed to low complexity; that stretch reads SLAAGESSSLSASTSVSDS. Residues 339-351 show a composition bias toward polar residues; sequence LFVSDNLGEQPTK. Positions 355 to 370 are enriched in acidic residues; that stretch reads EEDEEDEEDVDDEDHD. Residues 371 to 380 are compositionally biased toward basic and acidic residues; it reads EGFGSEHELS. Residues 381–401 are compositionally biased toward acidic residues; that stretch reads ENEEEEEEEEDYEDDKDDDIS. A bZIP domain is found at 521–584; the sequence is TARPRSRKEK…VNRVQNPRDE (64 aa). The segment at 523 to 532 is basic motif; the sequence is RPRSRKEKNK. Residues 533–540 are leucine-zipper; the sequence is LASRACRL.

Belongs to the bZIP family. CREBRF subfamily. Interacts (via leucine-zipper domain) with CREB3 (via leucine-zipper domain); the interaction promotes CREB3 degradation. Post-translationally, probably degraded by the proteasome.

Its subcellular location is the nucleus. Functionally, acts as a negative regulator of the endoplasmic reticulum stress response or unfolded protein response (UPR). Represses the transcriptional activity of CREB3 during the UPR. Recruits CREB3 into nuclear foci. In Homo sapiens (Human), this protein is CREB3 regulatory factor (CREBRF).